A 109-amino-acid polypeptide reads, in one-letter code: UPF0122 protein BH2485 (109 aa).

The protein belongs to the UPF0122 family.

Might take part in the signal recognition particle (SRP) pathway. This is inferred from the conservation of its genetic proximity to ftsY/ffh. May be a regulatory protein. This chain is UPF0122 protein BH2485, found in Halalkalibacterium halodurans (strain ATCC BAA-125 / DSM 18197 / FERM 7344 / JCM 9153 / C-125) (Bacillus halodurans).